A 319-amino-acid chain; its full sequence is Biotin synthase (319 aa).

In terms of domain architecture, Radical SAM core spans 44–273 (IHGDGIDLCS…EAKIRLAGGR (230 aa)). Residues Cys62, Cys66, and Cys69 each coordinate [4Fe-4S] cluster. Residues Ser106, Cys138, Cys198, and Arg268 each coordinate [2Fe-2S] cluster.

It belongs to the radical SAM superfamily. Biotin synthase family. As to quaternary structure, homodimer. [4Fe-4S] cluster is required as a cofactor. The cofactor is [2Fe-2S] cluster.

The enzyme catalyses (4R,5S)-dethiobiotin + (sulfur carrier)-SH + 2 reduced [2Fe-2S]-[ferredoxin] + 2 S-adenosyl-L-methionine = (sulfur carrier)-H + biotin + 2 5'-deoxyadenosine + 2 L-methionine + 2 oxidized [2Fe-2S]-[ferredoxin]. It functions in the pathway cofactor biosynthesis; biotin biosynthesis; biotin from 7,8-diaminononanoate: step 2/2. Catalyzes the conversion of dethiobiotin (DTB) to biotin by the insertion of a sulfur atom into dethiobiotin via a radical-based mechanism. This Clostridium perfringens (strain ATCC 13124 / DSM 756 / JCM 1290 / NCIMB 6125 / NCTC 8237 / Type A) protein is Biotin synthase.